A 371-amino-acid polypeptide reads, in one-letter code: Protein STRICTOSIDINE SYNTHASE-LIKE 6 (371 aa).

The signal sequence occupies residues 1–21; that stretch reads MPVFLSSRFLFFCIIVPLLIS. Residues asparagine 101 and asparagine 137 are each glycosylated (N-linked (GlcNAc...) asparagine). Tyrosine 303 carries the phosphotyrosine modification.

The protein belongs to the strictosidine synthase family.

It is found in the vacuole. The protein is Protein STRICTOSIDINE SYNTHASE-LIKE 6 of Arabidopsis thaliana (Mouse-ear cress).